The primary structure comprises 554 residues: Formate--tetrahydrofolate ligase (554 aa).

64-71 (TPYGEGKT) provides a ligand contact to ATP.

Belongs to the formate--tetrahydrofolate ligase family.

It carries out the reaction (6S)-5,6,7,8-tetrahydrofolate + formate + ATP = (6R)-10-formyltetrahydrofolate + ADP + phosphate. The protein operates within one-carbon metabolism; tetrahydrofolate interconversion. The sequence is that of Formate--tetrahydrofolate ligase from Caldicellulosiruptor saccharolyticus (strain ATCC 43494 / DSM 8903 / Tp8T 6331).